We begin with the raw amino-acid sequence, 302 residues long: tRNA pseudouridine synthase B (302 aa).

Aspartate 38 serves as the catalytic Nucleophile.

It belongs to the pseudouridine synthase TruB family. Type 1 subfamily.

It catalyses the reaction uridine(55) in tRNA = pseudouridine(55) in tRNA. In terms of biological role, responsible for synthesis of pseudouridine from uracil-55 in the psi GC loop of transfer RNAs. The sequence is that of tRNA pseudouridine synthase B from Geobacillus thermodenitrificans (strain NG80-2).